We begin with the raw amino-acid sequence, 493 residues long: NADH-quinone oxidoreductase subunit M (493 aa).

The next 14 helical transmembrane spans lie at 5 to 25, 37 to 57, 89 to 109, 115 to 135, 139 to 159, 172 to 192, 216 to 236, 251 to 271, 280 to 300, 308 to 328, 334 to 354, 375 to 395, 411 to 431, and 458 to 478; these read PIIS…LLFI, VMYV…YILI, ISIL…IGSL, YIKE…GAFT, LLLF…IIGV, FFLY…YIYS, ILWW…PFHT, VILA…VLLP, FAIY…LVAL, MIAY…FSFT, GAIF…LIVG, MPVL…LPGT, VNVV…VYML, and IISI…PSSI.

It belongs to the complex I subunit 4 family.

Its subcellular location is the cell membrane. It carries out the reaction a quinone + NADH + 5 H(+)(in) = a quinol + NAD(+) + 4 H(+)(out). Its function is as follows. NDH-1 shuttles electrons from NADH, via FMN and iron-sulfur (Fe-S) centers, to quinones in the respiratory chain. Couples the redox reaction to proton translocation (for every two electrons transferred, four hydrogen ions are translocated across the cytoplasmic membrane), and thus conserves the redox energy in a proton gradient. This Rickettsia conorii (strain ATCC VR-613 / Malish 7) protein is NADH-quinone oxidoreductase subunit M (nuoM).